A 637-amino-acid polypeptide reads, in one-letter code: MRFDDPMDEFKRNRKMEEDSKKVIDVKVAESDKGFAKFGKAEVPFHIPTLTKPQEEYKILVDNANNPFEHVLLEKSEDGLRFIHPLEELSVMDFVDRNLSEMRPVKPLPLEETPFKLVEEVKDLEDLAAALQSVEEFAVDLEHNQYRTFQGLTCLMQISTRTEDYIVDIFKLWDHIGPYLRELFKDPKKKKVIHGADRDIIWLQRDFGIYVCNLFDTGQASRVLKLERNSLEFLLKHYCGVAANKEYQKADWRIRPLPDVMKRYAREDTHYLLYIYDVMRMELHTMAKEDEQSDSPLVEVYKRSYDVCMQLYEKELWTRDSYLHVYGVQTGNLNAVQLSIVAGLCEWRDRIARADDESTGYVLPNKTLFDIAKEMPIVVAQLRRLLKSKLPYLERNFDAVISVIRRSMQNAAAFEPVVQSLKDRRPETVVEMNIEPKIEKTDTGASASSLSLEKVCVDDSKKQSSGFGVLPLKRKLESDKTVVEKNIEPKIEKTGTEASASSLSSKKVCVDDSKKQSSGFGVLLSKRKFESDNKVKEEVKVSKSKPDKVIIVVDDDDDDDDDESYEQSTKAADALDRVSETPSKGSPSLTQKPKTCNTEVIVLDDDDDSESREDEDMRRRSEKHRRFMNMKRGFLNI.

In terms of domain architecture, 3'-5' exonuclease spans 118 to 283 (VEEVKDLEDL…YIYDVMRMEL (166 aa)). In terms of domain architecture, HRDC spans 334–414 (NAVQLSIVAG…RRSMQNAAAF (81 aa)). Acidic residues predominate over residues 553-565 (VDDDDDDDDDESY). A disordered region spans residues 553 to 624 (VDDDDDDDDD…EDMRRRSEKH (72 aa)). Residues 580 to 598 (ETPSKGSPSLTQKPKTCNT) are compositionally biased toward polar residues. Residues 602–614 (VLDDDDDSESRED) are compositionally biased toward acidic residues.

The protein localises to the nucleus. It localises to the nucleoplasm. In terms of biological role, acts as an important epigenetic regulator through multiple silencing mechanisms. Involved in transcriptional gene silencing (TGS). Plays a role for DNA methylation in the RNA-directed DNA methylation (RdDM) pathway. Contributes to the methylation status of the retrotransposon SN1. Required for DNA methylation only at a subset of RdDM target loci. Plays a regulatory role in RdDM through retention of non-coding RNAs (ncRNAs) in normal cells. Helps to retain Pol V-transcribed RNAs in chromatin to enable their scaffold function and is required for genome-wide Pol IV-dependent siRNA (24 nt siRNA) production that may involve retention of Pol IV transcripts. Involved in association with RRP6L2 in the silencing of the solo LTR locus. Controls levels of ncRNAs from the solo LTR locus. Seems to function independently of the RdDM pathway. Functions redundantly with RRP6L2 in the regulation of FLC locus. Participates in the maintenance of trimethylated 'Lys-27' (H3K27me3) at FLC locus via the regulation of antisense long non-coding RNAs (lncRNAs) and the regulation of diverse antisense RNAs derived from the FLC locus. Seems not involved in the exosomal RNA degradation. Can complement the growth defect of a yeast mutant lacking RRP6 exonuclease. The sequence is that of Protein RRP6-like 1 from Arabidopsis thaliana (Mouse-ear cress).